The primary structure comprises 354 residues: Rhodopsin (354 aa).

Residues 1–36 (MNGTEGENFYVPMSNKTGVVRNPFEYPQYYLADHWM) are Extracellular-facing. N-linked (GlcNAc...) asparagine glycosylation is found at Asn2 and Asn15. A helical membrane pass occupies residues 37 to 61 (FAVLAAYMFFLIITGFPVNFLTLFV). The Cytoplasmic segment spans residues 62-73 (TIQNKKLRQPLN). Residues 74–96 (YILLNLAVANLFMVFGGFTTTLI) form a helical membrane-spanning segment. At 97–110 (TSMNGYFVFGSTGC) the chain is on the extracellular side. Cysteines 110 and 187 form a disulfide. The helical transmembrane segment at 111–133 (NLEGFFATLGGEISLWSLVVLAI) threads the bilayer. The 'Ionic lock' involved in activated form stabilization motif lies at 134–136 (ERY). Residues 134-152 (ERYVVVCKPMSNFRFGSQH) are Cytoplasmic-facing. The helical transmembrane segment at 153-173 (AIAGVSLTWVMAMACAAPPLV) threads the bilayer. The Extracellular segment spans residues 174 to 202 (GWSRYIPEGLQCSCGIDYYTPKPEINNVS). Asn200 is a glycosylation site (N-linked (GlcNAc...) asparagine). A helical transmembrane segment spans residues 203–224 (FVIYMFVVHFSIPLTIIFFCYG). Residues 225 to 252 (RLVCTVKAAAAQQQESETTQRAEREVTR) are Cytoplasmic-facing. The chain crosses the membrane as a helical span at residues 253 to 274 (MVVIMVIGFLICWLPYASVALY). Residues 275 to 286 (IFNNQGSEFGPV) are Extracellular-facing. The helical transmembrane segment at 287–308 (FMTIPSFFAKSSALYNPLIYIL) threads the bilayer. N6-(retinylidene)lysine is present on Lys296. Over 309–354 (MNKQFRNCMITTLCCGKNPFEEEESTSASASKTEASSVSSSQVSPA) the chain is Cytoplasmic. S-palmitoyl cysteine attachment occurs at residues Cys322 and Cys323. Residues 333–354 (STSASASKTEASSVSSSQVSPA) form a disordered region. Residues 334–354 (TSASASKTEASSVSSSQVSPA) show a composition bias toward low complexity.

It belongs to the G-protein coupled receptor 1 family. Opsin subfamily. In terms of processing, phosphorylated on some or all of the serine and threonine residues present in the C-terminal region. Post-translationally, contains one covalently linked retinal chromophore.

It is found in the membrane. Its subcellular location is the cell projection. The protein localises to the cilium. The protein resides in the photoreceptor outer segment. In terms of biological role, photoreceptor required for image-forming vision at low light intensity. While most salt water fish species use retinal as chromophore, most freshwater fish use 3-dehydroretinal, or a mixture of retinal and 3-dehydroretinal. Light-induced isomerization of 11-cis to all-trans retinal triggers a conformational change that activates signaling via G-proteins. Subsequent receptor phosphorylation mediates displacement of the bound G-protein alpha subunit by arrestin and terminates signaling. The polypeptide is Rhodopsin (rho) (Galeus melastomus (Blackmouth catshark)).